The sequence spans 256 residues: Thiazole synthase (256 aa).

K95 (schiff-base intermediate with DXP) is an active-site residue. 1-deoxy-D-xylulose 5-phosphate is bound by residues G156, A182 to G183, and N204 to T205.

This sequence belongs to the ThiG family. In terms of assembly, homotetramer. Forms heterodimers with either ThiH or ThiS.

The protein resides in the cytoplasm. It catalyses the reaction [ThiS sulfur-carrier protein]-C-terminal-Gly-aminoethanethioate + 2-iminoacetate + 1-deoxy-D-xylulose 5-phosphate = [ThiS sulfur-carrier protein]-C-terminal Gly-Gly + 2-[(2R,5Z)-2-carboxy-4-methylthiazol-5(2H)-ylidene]ethyl phosphate + 2 H2O + H(+). The protein operates within cofactor biosynthesis; thiamine diphosphate biosynthesis. Its function is as follows. Catalyzes the rearrangement of 1-deoxy-D-xylulose 5-phosphate (DXP) to produce the thiazole phosphate moiety of thiamine. Sulfur is provided by the thiocarboxylate moiety of the carrier protein ThiS. In vitro, sulfur can be provided by H(2)S. The sequence is that of Thiazole synthase from Salmonella choleraesuis (strain SC-B67).